The primary structure comprises 825 residues: Translation initiation factor IF-2 (825 aa).

Composition is skewed to basic and acidic residues over residues 1 to 19 (MTKK…DNKK), 35 to 45 (RKGEKKTEGKR), 70 to 98 (LLKD…EYKK), and 113 to 122 (KKVESVEKPA). The disordered stretch occupies residues 1 to 239 (MTKKQENETS…TQRKDRPLPE (239 aa)). Positions 158-169 (PSSSRRPSSRPS) are enriched in low complexity. The segment covering 181–191 (GRRRKSGKPGR) has biased composition (basic residues). The segment covering 194–208 (QNSYADQGRGANSNR) has biased composition (polar residues). Residues 211–220 (QRKRKNKKHQ) show a composition bias toward basic residues. The 170-residue stretch at 326–495 (VRPPVVTIMG…ILEADMLELK (170 aa)) folds into the tr-type G domain. The G1 stretch occupies residues 335-342 (GHVDHGKT). 335 to 342 (GHVDHGKT) provides a ligand contact to GTP. Positions 360–364 (GITQN) are G2. Residues 381-384 (DTPG) form a G3 region. GTP is bound by residues 381-385 (DTPGH) and 435-438 (NKMD). The G4 stretch occupies residues 435-438 (NKMD). Residues 471–473 (SAK) form a G5 region.

Belongs to the TRAFAC class translation factor GTPase superfamily. Classic translation factor GTPase family. IF-2 subfamily.

Its subcellular location is the cytoplasm. Its function is as follows. One of the essential components for the initiation of protein synthesis. Protects formylmethionyl-tRNA from spontaneous hydrolysis and promotes its binding to the 30S ribosomal subunits. Also involved in the hydrolysis of GTP during the formation of the 70S ribosomal complex. This Lactobacillus delbrueckii subsp. bulgaricus (strain ATCC BAA-365 / Lb-18) protein is Translation initiation factor IF-2.